The following is a 180-amino-acid chain: Early nodulin-16 (180 aa).

The signal sequence occupies residues 1-22 (MASSSPILLMIIFSMWLLISHS). The region spanning 25-129 (TDYLIGDSHN…GLKLAVVVQN (105 aa)) is the Phytocyanin domain. Asparagine 67 carries an N-linked (GlcNAc...) asparagine glycan. Cysteine 83 and cysteine 117 are disulfide-bonded. The N-linked (GlcNAc...) asparagine glycan is linked to asparagine 152. Serine 154 carries GPI-anchor amidated serine lipidation. Residues 155–180 (GNKGGAAGLGFIMWLGVSLVMMMFLI) constitute a propeptide, removed in mature form.

Belongs to the early nodulin-like (ENODL) family. In terms of tissue distribution, expressed in developing nodules upon symbiosis with Sinorhizobium meliloti.

It localises to the symbiosome. The protein localises to the cell membrane. May act as a carbohydrate transporter. In Medicago truncatula (Barrel medic), this protein is Early nodulin-16.